The following is an 89-amino-acid chain: Ixosin-B (89 aa).

The signal sequence occupies residues 1–26 (MASGWTHRLLLLAAVVTLGATPIAAA). The propeptide occupies 27 to 57 (SMEYLVTAPGYLTPNADIKITAVVTNPSSAG). Residues 68 to 89 (SGIQPEQHSSGKSDVRRWRSRY) are disordered. Residues 76-89 (SSGKSDVRRWRSRY) show a composition bias toward basic and acidic residues.

Functionally, has antifungal activity against C.albicans. Has antibacterial activity against the Gram-positive bacterium S.aureus and the Gram-negative bacterium E.coli. Lacks hemolytic activity against rabbit erythrocytes. This chain is Ixosin-B, found in Ixodes sinensis (Hard tick).